The primary structure comprises 473 residues: MTTPAITKTRFAPSPTGFLHVGGARTALYSWLQARANNGEFVLRIEDTDIERSTQAACDAILDGMNWLGLTWDEGPYYQTKRFDRYHEIIGQMLEKGTAYKCYCSRERIETMREEQAAAGLQQKYDGHCRNLAARETNEPFVIRFKNPLEGSVVFDDHVRGRIEISNEMLDDLIIQRTDGVPTYNFCVVVDDWDMGITSVVRGEDHINNTPRQINILKALGAPIPEYAHVSMILGDDGAKLSKRHGAVGVMQYRDDGYLPEALLNYLVRLGWSHGDQEIFSMEEMKQHFKLGDINKAASAFNTDKLIWLNQHYIKTLDPEYVASHLAWHMEDQNIDTSNGPALAEIVTALSERAKTLKELAESSRYFFEDFTDFDEVQAKKHLRGVALEPLTLVKTKLAALTEWSVSVIHQVIEDTATELEVGMGKVGMPLRVAVTGAGQSPALDLTLFLIGKDRSEQRISKAIDFVADRINS.

The 'HIGH' region motif lies at 13–23; sequence PSPTGFLHVGG. The short motif at 240 to 244 is the 'KMSKS' region element; the sequence is KLSKR. K243 contacts ATP.

It belongs to the class-I aminoacyl-tRNA synthetase family. Glutamate--tRNA ligase type 1 subfamily. Monomer.

Its subcellular location is the cytoplasm. The enzyme catalyses tRNA(Glu) + L-glutamate + ATP = L-glutamyl-tRNA(Glu) + AMP + diphosphate. Its function is as follows. Catalyzes the attachment of glutamate to tRNA(Glu) in a two-step reaction: glutamate is first activated by ATP to form Glu-AMP and then transferred to the acceptor end of tRNA(Glu). The protein is Glutamate--tRNA ligase of Shewanella denitrificans (strain OS217 / ATCC BAA-1090 / DSM 15013).